The following is a 111-amino-acid chain: Macrodomain Ori protein (111 aa).

Belongs to the MaoP family.

In terms of biological role, involved in the organization of the Ori region of the chromosome into a macrodomain (MD). It constrains DNA mobility in the Ori macrodomain and limits long-distance DNA interactions with other chromosomal regions. The sequence is that of Macrodomain Ori protein from Haemophilus influenzae (strain ATCC 51907 / DSM 11121 / KW20 / Rd).